Here is a 709-residue protein sequence, read N- to C-terminus: Myotubularin-related protein 11 (709 aa).

The segment at 1–39 (MWWGGRGQSFNIAPQKEEPEMGSVQENRMPEPRSRQPSS) is disordered. The Myotubularin phosphatase domain maps to 196–639 (METAEDWETE…PQIRLWRRCY (444 aa)).

Belongs to the protein-tyrosine phosphatase family. Non-receptor class myotubularin subfamily. Expressed in bone marrow, spleen and thymus.

The polypeptide is Myotubularin-related protein 11 (MTMR11) (Homo sapiens (Human)).